Reading from the N-terminus, the 466-residue chain is Glycine--tRNA ligase (466 aa).

The substrate site is built by arginine 104 and glutamate 178. ATP contacts are provided by residues 210–212 (RNE), 220–225 (FRTREF), 294–295 (EL), and 338–341 (GADR). 225 to 229 (FEQME) is a substrate binding site. Residue 334-338 (EPSLG) coordinates substrate.

The protein belongs to the class-II aminoacyl-tRNA synthetase family. In terms of assembly, homodimer.

It localises to the cytoplasm. It carries out the reaction tRNA(Gly) + glycine + ATP = glycyl-tRNA(Gly) + AMP + diphosphate. Functionally, catalyzes the attachment of glycine to tRNA(Gly). In Geobacillus thermodenitrificans (strain NG80-2), this protein is Glycine--tRNA ligase.